Consider the following 216-residue polypeptide: 4-hydroxy-tetrahydrodipicolinate reductase (216 aa).

Residues 9 to 12 (SGRM), 71 to 73 (GTT), and 95 to 98 (AYNF) each bind NAD(+). His-127 (proton donor/acceptor) is an active-site residue. His-128 is a (S)-2,3,4,5-tetrahydrodipicolinate binding site. Residue Lys-131 coordinates NAD(+). Lys-131 functions as the Proton donor in the catalytic mechanism. 137-138 (GT) provides a ligand contact to (S)-2,3,4,5-tetrahydrodipicolinate.

This sequence belongs to the DapB family. As to quaternary structure, homotetramer.

The protein resides in the cytoplasm. The catalysed reaction is (S)-2,3,4,5-tetrahydrodipicolinate + NAD(+) + H2O = (2S,4S)-4-hydroxy-2,3,4,5-tetrahydrodipicolinate + NADH + H(+). It catalyses the reaction (S)-2,3,4,5-tetrahydrodipicolinate + NADP(+) + H2O = (2S,4S)-4-hydroxy-2,3,4,5-tetrahydrodipicolinate + NADPH + H(+). The protein operates within amino-acid biosynthesis; L-lysine biosynthesis via DAP pathway; (S)-tetrahydrodipicolinate from L-aspartate: step 4/4. Is inhibited by high concentrations of NADH. In terms of biological role, catalyzes the conversion of 4-hydroxy-tetrahydrodipicolinate (HTPA) to tetrahydrodipicolinate. Uses NADPH as a reductant with much more efficiency than NADH. The chain is 4-hydroxy-tetrahydrodipicolinate reductase from Thermotoga maritima (strain ATCC 43589 / DSM 3109 / JCM 10099 / NBRC 100826 / MSB8).